The following is an 816-amino-acid chain: Leucine--tRNA ligase (816 aa).

Residues 40 to 51 (PYPSGSGLHVGH) carry the 'HIGH' region motif. The 'KMSKS' region signature appears at 576 to 580 (KMSKS). Position 579 (lysine 579) interacts with ATP.

This sequence belongs to the class-I aminoacyl-tRNA synthetase family.

It localises to the cytoplasm. It carries out the reaction tRNA(Leu) + L-leucine + ATP = L-leucyl-tRNA(Leu) + AMP + diphosphate. The polypeptide is Leucine--tRNA ligase (Chlorobium phaeobacteroides (strain DSM 266 / SMG 266 / 2430)).